Consider the following 414-residue polypeptide: Probable 26S proteasome regulatory subunit 6B (414 aa).

An ATP-binding site is contributed by 202 to 209 (GPPGCGKT).

This sequence belongs to the AAA ATPase family.

Its subcellular location is the cytoplasm. It localises to the nucleus. Functionally, the 26S proteasome is involved in the ATP-dependent degradation of ubiquitinated proteins. The regulatory (or ATPase) complex confers ATP dependency and substrate specificity to the 26S complex. The polypeptide is Probable 26S proteasome regulatory subunit 6B (rpt-3) (Caenorhabditis elegans).